Reading from the N-terminus, the 362-residue chain is MAQIFNFSSGPAMLPAEVLKQAQQELRDWNGLGTSVMEVSHRGKEFIQVAEEAEKDFRDLLNVPSNYKVLFCHGGGRGQFAAVPLNILGDKTTADYVDAGYWAASAIKEAKKYCTPNVFDAKVTVDGLRAVKPMREWQLSDNAAYMHYCPNETIDGIAIDETPDFGKDVVVAADFSSTILSRPIDVSRYGVIYAGAQKNIGPAGLTIVIVREDLLGKANIACPSILDYSILNDNGSMFNTPPTFAWYLSGLVFKWLKANGGVAEMDKINQQKAELLYGVIDNSDFYRNDVAKANRSRMNVPFQLADSALDKLFLEESFAAGLHALKGHRVVGGMRASIYNAMPLEGVKALTDFMIEFERRHG.

2 residues coordinate L-glutamate: Ser-9 and Arg-42. Residues 76 to 77 (GR), Trp-102, Thr-153, Asp-174, and Gln-197 each bind pyridoxal 5'-phosphate. N6-(pyridoxal phosphate)lysine is present on Lys-198. 239–240 (NT) contributes to the pyridoxal 5'-phosphate binding site.

It belongs to the class-V pyridoxal-phosphate-dependent aminotransferase family. SerC subfamily. As to quaternary structure, homodimer. Pyridoxal 5'-phosphate serves as cofactor.

It localises to the cytoplasm. The enzyme catalyses O-phospho-L-serine + 2-oxoglutarate = 3-phosphooxypyruvate + L-glutamate. The catalysed reaction is 4-(phosphooxy)-L-threonine + 2-oxoglutarate = (R)-3-hydroxy-2-oxo-4-phosphooxybutanoate + L-glutamate. It participates in amino-acid biosynthesis; L-serine biosynthesis; L-serine from 3-phospho-D-glycerate: step 2/3. Its pathway is cofactor biosynthesis; pyridoxine 5'-phosphate biosynthesis; pyridoxine 5'-phosphate from D-erythrose 4-phosphate: step 3/5. Catalyzes the reversible conversion of 3-phosphohydroxypyruvate to phosphoserine and of 3-hydroxy-2-oxo-4-phosphonooxybutanoate to phosphohydroxythreonine. The protein is Phosphoserine aminotransferase of Escherichia coli O17:K52:H18 (strain UMN026 / ExPEC).